The sequence spans 268 residues: Tryptophan synthase alpha chain (268 aa).

Active-site proton acceptor residues include Glu-49 and Asp-60.

Belongs to the TrpA family. Tetramer of two alpha and two beta chains.

The enzyme catalyses (1S,2R)-1-C-(indol-3-yl)glycerol 3-phosphate + L-serine = D-glyceraldehyde 3-phosphate + L-tryptophan + H2O. It functions in the pathway amino-acid biosynthesis; L-tryptophan biosynthesis; L-tryptophan from chorismate: step 5/5. Its function is as follows. The alpha subunit is responsible for the aldol cleavage of indoleglycerol phosphate to indole and glyceraldehyde 3-phosphate. In Escherichia coli O157:H7, this protein is Tryptophan synthase alpha chain.